The following is a 94-amino-acid chain: Small ribosomal subunit protein uS19 (94 aa).

It belongs to the universal ribosomal protein uS19 family.

Its function is as follows. Protein S19 forms a complex with S13 that binds strongly to the 16S ribosomal RNA. This is Small ribosomal subunit protein uS19 from Finegoldia magna (strain ATCC 29328 / DSM 20472 / WAL 2508) (Peptostreptococcus magnus).